Here is a 539-residue protein sequence, read N- to C-terminus: Inositol 1,4,5-triphosphate receptor associated 2 (539 aa).

Disordered regions lie at residues 1-21, 69-98, and 147-171; these read MLCV…DVTR, YLTQ…LHMA, and AGEE…ISMP. Residues 1-479 lie on the Cytoplasmic side of the membrane; sequence MLCVKGPPEQ…LQASFRRANR (479 aa). Positions 74-92 are enriched in low complexity; it reads SSEQTSSSESTVTSSESGS. Thr-78 is subject to Phosphothreonine. The stretch at 298–326 forms a coiled coil; sequence MIQHVENLKRMYAKEHAELEDLKQALLQN. The segment at 334 to 353 is disordered; it reads PDEDDCQIKKRSSSLNSKPS. A phosphoserine mark is found at Ser-347, Ser-354, and Ser-408. Residues 418-449 form a disordered region; it reads ERSDVKARDAPEPQGEEAVERTRKPSLSERRS. The span at 435–449 shows a compositional bias: basic and acidic residues; that stretch reads AVERTRKPSLSERRS. A helical; Anchor for type IV membrane protein membrane pass occupies residues 480-500; sequence ALWLTGLIIILIAALMSFLTG. The Lumenal portion of the chain corresponds to 501–539; that stretch reads QLFQTAVEAAPTQEGDSWLSLEHILWPFTRLGHDGPPPV.

It belongs to the IRAG2 family. In terms of assembly, interacts (via coiled-coil domain) with ITPR3. Interacts with SUN1 and SUN2. Interacts with microtubules. Interacts with HCN4; regulates HCN4 channel activity. In terms of processing, the removal of the C-terminal lumenal domain occurs by proteolytic processing. As to expression, spleen and thymus. Expressed at high levels in pre B-cells, mature B-cells and pre T-cells. Expressed at low levels in mature T-cells and plasma B-cells. Expressed in circumvallate (CV), foliate (FL) and fungiform (FF) taste papillae cells of the tongue epithelium.

Its subcellular location is the cytoplasm. The protein resides in the endoplasmic reticulum membrane. It localises to the nucleus envelope. It is found in the cytoskeleton. The protein localises to the microtubule organizing center. Its subcellular location is the centrosome. The protein resides in the spindle pole. It localises to the chromosome. Functionally, plays a role in the delivery of peptides to major histocompatibility complex (MHC) class I molecules; this occurs in a transporter associated with antigen processing (TAP)-independent manner. May play a role in taste signal transduction via ITPR3. May play a role during fertilization in pronucleus congression and fusion. Plays a role in maintaining nuclear shape, maybe as a component of the LINC complex and through interaction with microtubules. Plays a role in the regulation of cellular excitability by regulating the hyperpolarization-activated cyclic nucleotide-gated HCN4 channel activity. The polypeptide is Inositol 1,4,5-triphosphate receptor associated 2 (Irag2) (Mus musculus (Mouse)).